The following is a 151-amino-acid chain: ALK and LTK ligand 2 (151 aa).

A signal peptide spans 1-25 (MRVSGRPMLLALLLLLSTVGDPGHA). 2 cysteine pairs are disulfide-bonded: cysteine 112–cysteine 148 and cysteine 126–cysteine 135.

Belongs to the ALKAL family. Homodimer.

The protein resides in the secreted. The protein localises to the cell membrane. Cytokine that acts as a physiological ligand for receptor tyrosine kinases LTK and ALK, leading to their activation. Cytokine-binding is sufficient to activate LTK. In contrast, ALKAL2-driven activation of ALK is coupled with heparin-binding to ALK. Stimulation of ALK signaling is involved in neural development and regulation of energy expenditure. The polypeptide is ALK and LTK ligand 2 (Rattus norvegicus (Rat)).